The primary structure comprises 433 residues: ATP-dependent protease ATPase subunit HslU (433 aa).

ATP contacts are provided by residues isoleucine 18, 60–65, aspartate 246, glutamate 311, and arginine 383; that span reads GVGKTE.

Belongs to the ClpX chaperone family. HslU subfamily. In terms of assembly, a double ring-shaped homohexamer of HslV is capped on each side by a ring-shaped HslU homohexamer. The assembly of the HslU/HslV complex is dependent on binding of ATP.

Its subcellular location is the cytoplasm. Its function is as follows. ATPase subunit of a proteasome-like degradation complex; this subunit has chaperone activity. The binding of ATP and its subsequent hydrolysis by HslU are essential for unfolding of protein substrates subsequently hydrolyzed by HslV. HslU recognizes the N-terminal part of its protein substrates and unfolds these before they are guided to HslV for hydrolysis. The protein is ATP-dependent protease ATPase subunit HslU of Cereibacter sphaeroides (strain ATCC 17025 / ATH 2.4.3) (Rhodobacter sphaeroides).